The primary structure comprises 344 residues: Phenylalanine--tRNA ligase alpha subunit (344 aa).

Position 256 (Glu-256) interacts with Mg(2+).

This sequence belongs to the class-II aminoacyl-tRNA synthetase family. Phe-tRNA synthetase alpha subunit type 1 subfamily. Tetramer of two alpha and two beta subunits. The cofactor is Mg(2+).

The protein resides in the cytoplasm. It catalyses the reaction tRNA(Phe) + L-phenylalanine + ATP = L-phenylalanyl-tRNA(Phe) + AMP + diphosphate + H(+). The polypeptide is Phenylalanine--tRNA ligase alpha subunit (Bacillus cereus (strain G9842)).